The chain runs to 240 residues: C-type lectin domain family 4 member A (240 aa).

The Cytoplasmic segment spans residues 1–48; the sequence is MASEITYAEVRIKNESNSSVTYSGSPAAPREKPTRHLSKPGSLLVPFT. Residues 5–10 carry the ITIM motif motif; the sequence is ITYAEV. A disordered region spans residues 18–38; it reads SSVTYSGSPAAPREKPTRHLS. A helical; Signal-anchor for type II membrane protein membrane pass occupies residues 49–69; the sequence is SLMVLLLLLAITFLVAFIIYF. At 70–240 the chain is on the extracellular side; that stretch reads QKYSQFLEEK…SVCQMKKIQL (171 aa). 3 disulfide bridges follow: Cys-107–Cys-118, Cys-140–Cys-233, and Cys-208–Cys-225. One can recognise a C-type lectin domain in the interval 129–235; the sequence is SKASWSESEK…SGKQQSVCQM (107 aa). Ca(2+) contacts are provided by Val-149 and Glu-155. Residue Asn-190 is glycosylated (N-linked (GlcNAc...) asparagine). Ca(2+) contacts are provided by Glu-200, Ser-202, and Glu-206. Alpha-D-mannopyranose-binding positions include 200-202 and Glu-206; that span reads EPS. An N-acetyl-D-glucosamine-binding site is contributed by 211 to 213; sequence INH. 2 residues coordinate Ca(2+): Asn-221 and Asp-222.

In terms of assembly, may interact with PTPN6 via its ITIM site. Expressed by myeloid cells (dendritic cells, macrophages, and neutrophils) and B-cells.

Its subcellular location is the cell membrane. Its function is as follows. C-type lectin receptor that binds carbohydrates mannose and fucose but also weakly interacts with N-acetylglucosamine (GlcNAc) in a Ca(2+)-dependent manner. Involved in regulating immune reactivity. Once triggered by antigen, it is internalized by clathrin-dependent endocytosis and delivers its antigenic cargo into the antigen presentation pathway resulting in cross-priming of CD8(+) T cells. This cross-presentation and cross-priming are enhanced by TLR7 and TLR8 agonists with increased expansion of the CD8(+) T cells, high production of IFNG and TNF with reduced levels of IL4, IL5 and IL13. In plasmacytoid dendritic cells, inhibits TLR9-mediated IFNA and TNF production. May be involved via its ITIM motif (immunoreceptor tyrosine-based inhibitory motifs) in the inhibition of B-cell-receptor-mediated calcium mobilization and protein tyrosine phosphorylation. The sequence is that of C-type lectin domain family 4 member A (Clec4a) from Rattus norvegicus (Rat).